The sequence spans 150 residues: Large ribosomal subunit protein bL9 (150 aa).

It belongs to the bacterial ribosomal protein bL9 family.

Functionally, binds to the 23S rRNA. The chain is Large ribosomal subunit protein bL9 from Pectobacterium carotovorum subsp. carotovorum (strain PC1).